Reading from the N-terminus, the 406-residue chain is Copper transport protein CTR1 (406 aa).

Residues 1–152 (MEGMNMGSSM…HHLHANNSGK (152 aa)) lie on the Cytoplasmic side of the membrane. 3 tandem repeats follow at residues 9 to 27 (SMNM…SSMA), 28 to 46 (SMSM…SSMS), and 47 to 65 (SMSM…STMS). The interval 9-65 (SMNMDAMSSASKTVASSMASMSMDAMSSASKTILSSMSSMSMEAMSSASKTLASTMS) is 3 X 19 AA tandem repeats of S-M-X-M-X-A-M-S-S-A-S-K-T-X-X-S-X-M-X. The tract at residues 71-117 (SMGSSSMSGMSMSMSSTPTSSASAQTTSDSSMSGMSGMSSSDNSSSS) is disordered. The helical transmembrane segment at 153–173 (AFGIFLLFVVAAFVYKLLLFV) threads the bilayer. Topologically, residues 174–250 (SWCLEVHWFK…RAFLVFTSTM (77 aa)) are extracellular. A helical transmembrane segment spans residues 251-271 (IIYMLMLATMSFVLTYVFAVI). At 272 to 406 (TGLALSEVFF…LLPAEKFTHN (135 aa)) the chain is on the cytoplasmic side. The REP-III signature appears at 304–315 (CPGFGNCQCGRH). The disordered stretch occupies residues 318 to 406 (PSPDPIAVAD…LLPAEKFTHN (89 aa)). At S344 the chain carries Phosphoserine. A Glycyl lysine isopeptide (Lys-Gly) (interchain with G-Cter in ubiquitin) cross-link involves residue K345. S349 bears the Phosphoserine mark. Composition is skewed to polar residues over residues 349 to 375 (SENN…NQAN) and 384 to 395 (SKLQEQSGNMDQ). T356 carries the phosphothreonine modification. Phosphoserine is present on S369.

As to quaternary structure, homooligomer. In terms of processing, extensively O-glycosylated.

It localises to the cell membrane. The catalysed reaction is Cu(2+)(in) = Cu(2+)(out). In terms of biological role, high-affinity copper transporter of plasma membrane that mediates copper uptake under low copper conditions. Copper transport through the high affinity system requiring CTRl supplies the iron transport multicopper ferroxidase FET3 with copper, which in turn is required for ferrous iron uptake. The energy for translocation is unlikely to be directly derived from ATP hydrolysis and the exact mechanism driving the transmembrane transport of copper has still to be determined. Binds 4 copper ions via its C-terminal cystein-rich domain and is able to deliver Cu(I) directly to both the chaperone ATX1 and to an N-terminal domain of the CCC2 protein. Also able to mediate the uptake of the anticancer drug cisplatin. The protein is Copper transport protein CTR1 of Saccharomyces cerevisiae (strain ATCC 204508 / S288c) (Baker's yeast).